Consider the following 535-residue polypeptide: CTP synthase (535 aa).

The tract at residues 1–270 (MSKNTKYVFV…DRLVCEKLGL (270 aa)) is amidoligase domain. Ser16 contacts CTP. Ser16 contributes to the UTP binding site. 17–22 (SLGKGI) contacts ATP. Tyr57 provides a ligand contact to L-glutamine. Residue Asp74 participates in ATP binding. Mg(2+) contacts are provided by Asp74 and Glu144. Residues 151–153 (DIE), 191–196 (KTKPTQ), and Lys227 each bind CTP. UTP-binding positions include 191 to 196 (KTKPTQ) and Lys227. One can recognise a Glutamine amidotransferase type-1 domain in the interval 295–535 (KIALVGKYVE…GFVGAALNNK (241 aa)). Gly357 is an L-glutamine binding site. Residue Cys384 is the Nucleophile; for glutamine hydrolysis of the active site. L-glutamine is bound by residues 385–388 (LGMQ), Glu408, and Arg465. Residues His510 and Glu512 contribute to the active site.

It belongs to the CTP synthase family. Homotetramer.

The enzyme catalyses UTP + L-glutamine + ATP + H2O = CTP + L-glutamate + ADP + phosphate + 2 H(+). It carries out the reaction L-glutamine + H2O = L-glutamate + NH4(+). It catalyses the reaction UTP + NH4(+) + ATP = CTP + ADP + phosphate + 2 H(+). It functions in the pathway pyrimidine metabolism; CTP biosynthesis via de novo pathway; CTP from UDP: step 2/2. Allosterically activated by GTP, when glutamine is the substrate; GTP has no effect on the reaction when ammonia is the substrate. The allosteric effector GTP functions by stabilizing the protein conformation that binds the tetrahedral intermediate(s) formed during glutamine hydrolysis. Inhibited by the product CTP, via allosteric rather than competitive inhibition. Its function is as follows. Catalyzes the ATP-dependent amination of UTP to CTP with either L-glutamine or ammonia as the source of nitrogen. Regulates intracellular CTP levels through interactions with the four ribonucleotide triphosphates. This is CTP synthase from Clostridium perfringens (strain ATCC 13124 / DSM 756 / JCM 1290 / NCIMB 6125 / NCTC 8237 / Type A).